Consider the following 105-residue polypeptide: Secreted effector protein PINE1 (105 aa).

The first 21 residues, 1–21 (MKLSQPLSIFAILAASTVAVA), serve as a signal peptide directing secretion.

As to quaternary structure, interacts with Arabidopsis thaliana PGIP1.

It is found in the secreted. Functionally, effector protein required for full virulence. Directly interacts with and functionally inactivates PG-inhibiting proteins (PGIPs). PGIPs are a defense mechanism of infected plants, that inhibit the plant pathogens secreted polygalacturonases (PGs) used to degrade the plant cell wall. Excerts its function by interacting with host PGIPs to negate their polygalacturonase-inhibiting function via enhanced dissociation of PGIPs from PGs. The polypeptide is Secreted effector protein PINE1 (Sclerotinia sclerotiorum (strain ATCC 18683 / 1980 / Ss-1) (White mold)).